Here is a 308-residue protein sequence, read N- to C-terminus: UDP-N-acetylenolpyruvoylglucosamine reductase (308 aa).

The FAD-binding PCMH-type domain maps to 22–185; it reads RVGGPADWLF…TEATFRAEAG (164 aa). Arg-165 is a catalytic residue. Over residues 197-211 the composition is skewed to basic and acidic residues; sequence QIARRDSSQPTKERS. The disordered stretch occupies residues 197 to 228; sequence QIARRDSSQPTKERSAGSTFRNPAGFSSTGRA. Positions 212-226 are enriched in polar residues; sequence AGSTFRNPAGFSSTG. Catalysis depends on Ser-214, which acts as the Proton donor. Glu-296 is an active-site residue.

Belongs to the MurB family. FAD serves as cofactor.

Its subcellular location is the cytoplasm. The enzyme catalyses UDP-N-acetyl-alpha-D-muramate + NADP(+) = UDP-N-acetyl-3-O-(1-carboxyvinyl)-alpha-D-glucosamine + NADPH + H(+). It functions in the pathway cell wall biogenesis; peptidoglycan biosynthesis. Cell wall formation. This Cereibacter sphaeroides (strain ATCC 17023 / DSM 158 / JCM 6121 / CCUG 31486 / LMG 2827 / NBRC 12203 / NCIMB 8253 / ATH 2.4.1.) (Rhodobacter sphaeroides) protein is UDP-N-acetylenolpyruvoylglucosamine reductase.